Consider the following 450-residue polypeptide: Glucose-6-phosphate isomerase (450 aa).

The active-site Proton donor is the glutamate 291. Active-site residues include histidine 312 and lysine 426.

Belongs to the GPI family.

Its subcellular location is the cytoplasm. It catalyses the reaction alpha-D-glucose 6-phosphate = beta-D-fructose 6-phosphate. The protein operates within carbohydrate biosynthesis; gluconeogenesis. It functions in the pathway carbohydrate degradation; glycolysis; D-glyceraldehyde 3-phosphate and glycerone phosphate from D-glucose: step 2/4. In terms of biological role, catalyzes the reversible isomerization of glucose-6-phosphate to fructose-6-phosphate. In Clostridium perfringens (strain ATCC 13124 / DSM 756 / JCM 1290 / NCIMB 6125 / NCTC 8237 / Type A), this protein is Glucose-6-phosphate isomerase.